The sequence spans 80 residues: Histone H1.M6.1 (80 aa).

The tract at residues 1-80 (MSDAAVPPKK…KAVKKAPKKK (80 aa)) is disordered. A compositionally biased stretch (basic residues) spans 11–80 (ASPKKAAAKK…KAVKKAPKKK (70 aa)).

The protein localises to the nucleus. It localises to the chromosome. This is Histone H1.M6.1 from Trypanosoma cruzi.